Consider the following 306-residue polypeptide: Aspartate carbamoyltransferase catalytic subunit (306 aa).

Carbamoyl phosphate is bound by residues Arg56 and Thr57. Residue Lys84 coordinates L-aspartate. Carbamoyl phosphate contacts are provided by Arg106, His134, and Gln137. Arg167 and Arg221 together coordinate L-aspartate. Positions 262 and 263 each coordinate carbamoyl phosphate.

This sequence belongs to the aspartate/ornithine carbamoyltransferase superfamily. ATCase family. In terms of assembly, heterododecamer (2C3:3R2) of six catalytic PyrB chains organized as two trimers (C3), and six regulatory PyrI chains organized as three dimers (R2).

It carries out the reaction carbamoyl phosphate + L-aspartate = N-carbamoyl-L-aspartate + phosphate + H(+). It participates in pyrimidine metabolism; UMP biosynthesis via de novo pathway; (S)-dihydroorotate from bicarbonate: step 2/3. Catalyzes the condensation of carbamoyl phosphate and aspartate to form carbamoyl aspartate and inorganic phosphate, the committed step in the de novo pyrimidine nucleotide biosynthesis pathway. The chain is Aspartate carbamoyltransferase catalytic subunit from Desulforudis audaxviator (strain MP104C).